The chain runs to 246 residues: tRNA pseudouridine synthase A (246 aa).

D52 functions as the Nucleophile in the catalytic mechanism. Y111 serves as a coordination point for substrate.

Belongs to the tRNA pseudouridine synthase TruA family. Homodimer.

The enzyme catalyses uridine(38/39/40) in tRNA = pseudouridine(38/39/40) in tRNA. Functionally, formation of pseudouridine at positions 38, 39 and 40 in the anticodon stem and loop of transfer RNAs. The protein is tRNA pseudouridine synthase A of Ehrlichia ruminantium (strain Welgevonden).